The sequence spans 617 residues: Prothrombin (617 aa).

Positions 1–24 are cleaved as a signal peptide; the sequence is MLHVRGLGLPGCLALAALASLVHS. The propeptide occupies 25-43; sequence QHVFLAPQQALSLLQRVRR. Positions 44-90 constitute a Gla domain; it reads ANSGFLEELRKGNLERECVEEQCSYEEAFEALESPQDTDVFWAKYTV. Residues Glu50, Glu51, Glu58, Glu60, Glu63, Glu64, Glu69, Glu70, Glu73, and Glu76 each carry the 4-carboxyglutamate modification. Residues Cys61 and Cys66 are joined by a disulfide bond. 10 disulfides stabilise this stretch: Cys91–Cys104, Cys109–Cys187, Cys130–Cys170, Cys158–Cys182, Cys215–Cys292, Cys236–Cys276, Cys264–Cys287, Cys332–Cys478, Cys387–Cys403, and Cys532–Cys546. Kringle domains follow at residues 109–187 and 215–292; these read CAMD…IPVC and CLLE…LNYC. Asn120 and Asn144 each carry an N-linked (GlcNAc...) asparagine glycan. The 255-residue stretch at 360–614 folds into the Peptidase S1 domain; that stretch reads IVEGWDAEKG…LKRWMQKVID (255 aa). His402 serves as the catalytic Charge relay system. N-linked (GlcNAc...) asparagine glycosylation is present at Asn412. Catalysis depends on Asp458, which acts as the Charge relay system. The tract at residues 547-569 is high affinity receptor-binding region which is also known as the TP508 peptide; it reads AGFKVNDTKRGDACEGDSGGPFV. Asn552 is a glycosylation site (N-linked (GlcNAc...) asparagine). Cys560 and Cys590 form a disulfide bridge. Ser564 serves as the catalytic Charge relay system.

Belongs to the peptidase S1 family. As to quaternary structure, heterodimer (named alpha-thrombin) of a light and a heavy chain; disulfide-linked. Forms a heterodimer with SERPINA5. In plasma, interacts (via N-terminus) with alpha-1-microglobulin; this interaction does not prevent the activation of prothrombin to thrombin. Post-translationally, the gamma-carboxyglutamyl residues, which bind calcium ions, result from the carboxylation of glutamyl residues by a microsomal enzyme, the vitamin K-dependent carboxylase. The modified residues are necessary for the calcium-dependent interaction with a negatively charged phospholipid surface, which is essential for the conversion of prothrombin to thrombin. In terms of processing, in the penultimate step of the coagulation cascade, prothrombin is converted to thrombin by the prothrombinase complex composed of factor Xa (F10), cofactor Va (F5), and phospholipids. This activation requires factor Xa-catalyzed sequential cleavage at 2 sites, Arg-310 and Arg-359, along 2 possible pathways. In the first pathway, the first cleavage occurs at Arg-310, leading to the formation of the inactive intermediate prethrombin-2. This pathway preferentially occurs on platelets and in the absence of cofactor Va. In the second pathway, the first cleavage occurs at Arg-359, which separates protease domain into 2 chains that remain connected through a disulfide bond and generates the active intermediate meizothrombin. The presence of cofactor Va directs activation along the meizothrombin pathway and greatly accelerates the rate of cleavage at Arg-359, but has a smaller effect on the cleavage of meizothrombin at Arg-310. Meizothrombin accumulates as an intermediate when prothrombinase is assembled on the membrane of red blood cells.

It carries out the reaction Selective cleavage of Arg-|-Gly bonds in fibrinogen to form fibrin and release fibrinopeptides A and B.. With respect to regulation, activity is promoted in the presence of negatively charged surfaces, such as polyphosphate and dextran sulfate. Inhibited by SERPINA5. Thrombin, which cleaves bonds after Arg and Lys, converts fibrinogen to fibrin and activates factors V, VII, VIII, XIII, and, in complex with thrombomodulin, protein C. Functions in blood homeostasis, inflammation and wound healing. Activates coagulation factor XI (F11); activation is promoted by the contact with negatively charged surfaces. Triggers the production of pro-inflammatory cytokines, such as MCP-1/CCL2 and IL8/CXCL8, in endothelial cells. In Rattus norvegicus (Rat), this protein is Prothrombin (F2).